Consider the following 583-residue polypeptide: Laccase-21 (583 aa).

The signal sequence occupies residues 1–29; that stretch reads MGIAKIPAVLWLLACAVLTFAVAISPAHG. 2 Plastocyanin-like domains span residues 39–155 and 165–323; these read FITE…PKHG and KEIP…YYTG. Asn-85 carries N-linked (GlcNAc...) asparagine glycosylation. The Cu cation site is built by His-89, His-91, His-134, and His-136. 7 N-linked (GlcNAc...) asparagine glycosylation sites follow: Asn-282, Asn-311, Asn-384, Asn-387, Asn-399, Asn-409, and Asn-446. The region spanning 436-567 is the Plastocyanin-like 3 domain; that stretch reads FPNNPAPVFV…NTVFIVKDGK (132 aa). Residues His-484, His-487, His-489, His-546, Cys-547, His-548, His-552, and Met-557 each coordinate Cu cation.

This sequence belongs to the multicopper oxidase family. Cu cation serves as cofactor.

Its subcellular location is the secreted. The protein resides in the extracellular space. The protein localises to the apoplast. It catalyses the reaction 4 hydroquinone + O2 = 4 benzosemiquinone + 2 H2O. Its function is as follows. Lignin degradation and detoxification of lignin-derived products. In Oryza sativa subsp. japonica (Rice), this protein is Laccase-21 (LAC21).